The sequence spans 944 residues: 2-oxoglutarate dehydrogenase E1 component (944 aa).

Residues 918–944 form a disordered region; it reads SSTAEGDPTVHKKEQERIVSDSLTRKN. A compositionally biased stretch (basic and acidic residues) spans 925-936; that stretch reads PTVHKKEQERIV.

The protein belongs to the alpha-ketoglutarate dehydrogenase family. Homodimer. Part of the 2-oxoglutarate dehydrogenase (OGDH) complex composed of E1 (2-oxoglutarate dehydrogenase), E2 (dihydrolipoamide succinyltransferase) and E3 (dihydrolipoamide dehydrogenase); the complex contains multiple copies of the three enzymatic components (E1, E2 and E3). Thiamine diphosphate serves as cofactor.

It carries out the reaction N(6)-[(R)-lipoyl]-L-lysyl-[protein] + 2-oxoglutarate + H(+) = N(6)-[(R)-S(8)-succinyldihydrolipoyl]-L-lysyl-[protein] + CO2. In terms of biological role, E1 component of the 2-oxoglutarate dehydrogenase (OGDH) complex which catalyzes the decarboxylation of 2-oxoglutarate, the first step in the conversion of 2-oxoglutarate to succinyl-CoA and CO(2). The chain is 2-oxoglutarate dehydrogenase E1 component from Bacillus pumilus (strain SAFR-032).